The sequence spans 585 residues: Rab GTPase-binding effector protein 2 (585 aa).

The residue at position 2 (A2) is an N-acetylalanine. Residues 27–183 (QEGAKVEAES…ELIQEIQRRP (157 aa)) are a coiled coil. Disordered regions lie at residues 178–265 (EIQR…ASLV), 381–408 (ENQG…EESL), and 491–515 (EEQS…EEAQ). Phosphoserine is present on residues S188, S192, S198, and S202. Residues 288 to 540 (NQWEQLQLEG…QAELETSEQV (253 aa)) adopt a coiled-coil conformation. Basic and acidic residues predominate over residues 491-501 (EEQSKAKRQEV).

It belongs to the rabaptin family. Heterodimer with RABGEF1. The dimer binds RAB5A that has been activated by GTP-binding. Interacts with SDCCAG8; this interaction is important for ciliogenesis regulation. Interacts with RAB4; this interaction may mediate VEGFR2 cell surface expression.

It localises to the cytoplasm. Its subcellular location is the early endosome. The protein resides in the cytoskeleton. It is found in the microtubule organizing center. The protein localises to the centrosome. It localises to the cilium basal body. Plays a role in membrane trafficking and in homotypic early endosome fusion. Participates in arteriogenesis by regulating vascular endothelial growth factor receptor 2/VEGFR2 cell surface expression and endosomal trafficking. By interacting with SDCCAG8, localizes to centrosomes and plays a critical role in ciliogenesis. In Bos taurus (Bovine), this protein is Rab GTPase-binding effector protein 2 (RABEP2).